Consider the following 246-residue polypeptide: Nodulin-25 (246 aa).

Residues 1–24 (MVYSNTYMLLGLGVFVLLSSHVLA) form the signal peptide.

It is found in the symbiosome. The protein resides in the peribacteroid space. Involved in the development and function of nodules. It might participate in the biological process of symbiotic nitrogen fixation. This chain is Nodulin-25 (NMS-25), found in Medicago sativa (Alfalfa).